An 81-amino-acid chain; its full sequence is Protein PYP1 (81 aa).

The N-terminal 25 residues, 1-25, are a transit peptide targeting the chloroplast; it reads MAFVSGFTGMPVTARVSKAVCRTRM. Positions 27-57 are disordered; that stretch reads LEGGKSSGGGEATRDPEPTAVDPNDPKGKQQ.

It is found in the plastid. It localises to the chloroplast. The sequence is that of Protein PYP1 from Pyropia yezoensis (Susabi-nori).